We begin with the raw amino-acid sequence, 357 residues long: UDP-N-acetylglucosamine--N-acetylmuramyl-(pentapeptide) pyrophosphoryl-undecaprenol N-acetylglucosamine transferase (357 aa).

Residues 15–17 (SGG), asparagine 125, serine 190, and glutamine 290 each bind UDP-N-acetyl-alpha-D-glucosamine.

This sequence belongs to the glycosyltransferase 28 family. MurG subfamily.

It is found in the cell inner membrane. The enzyme catalyses di-trans,octa-cis-undecaprenyl diphospho-N-acetyl-alpha-D-muramoyl-L-alanyl-D-glutamyl-meso-2,6-diaminopimeloyl-D-alanyl-D-alanine + UDP-N-acetyl-alpha-D-glucosamine = di-trans,octa-cis-undecaprenyl diphospho-[N-acetyl-alpha-D-glucosaminyl-(1-&gt;4)]-N-acetyl-alpha-D-muramoyl-L-alanyl-D-glutamyl-meso-2,6-diaminopimeloyl-D-alanyl-D-alanine + UDP + H(+). It functions in the pathway cell wall biogenesis; peptidoglycan biosynthesis. Its function is as follows. Cell wall formation. Catalyzes the transfer of a GlcNAc subunit on undecaprenyl-pyrophosphoryl-MurNAc-pentapeptide (lipid intermediate I) to form undecaprenyl-pyrophosphoryl-MurNAc-(pentapeptide)GlcNAc (lipid intermediate II). This chain is UDP-N-acetylglucosamine--N-acetylmuramyl-(pentapeptide) pyrophosphoryl-undecaprenol N-acetylglucosamine transferase, found in Chlamydia pneumoniae (Chlamydophila pneumoniae).